We begin with the raw amino-acid sequence, 351 residues long: Foldase protein PrsA 1 (351 aa).

The first 22 residues, 1-22 (MKNSNKLIASVVTLASVMALAA), serve as a signal peptide directing secretion. A lipid anchor (N-palmitoyl cysteine) is attached at C23. C23 carries S-diacylglycerol cysteine lipidation. Residues 145 to 240 (TPTMAVEMIT…KKFYIVKVTK (96 aa)) form the PpiC domain. Low complexity-rich tracts occupy residues 303–317 (KTKA…SESS) and 326–351 (ESEQ…PAAQ). A disordered region spans residues 303–351 (KTKAASESSTTSESSKAAEENPSESEQTQTSSAEEPTETEAQTQEPAAQ).

The protein belongs to the PrsA family.

Its subcellular location is the cell membrane. The catalysed reaction is [protein]-peptidylproline (omega=180) = [protein]-peptidylproline (omega=0). Its function is as follows. Plays a major role in protein secretion by helping the post-translocational extracellular folding of several secreted proteins. The protein is Foldase protein PrsA 1 of Streptococcus pyogenes serotype M6 (strain ATCC BAA-946 / MGAS10394).